We begin with the raw amino-acid sequence, 668 residues long: Calpain-13 (668 aa).

Residues 34–331 (LFIDDTFPAE…FSCLYICSQF (298 aa)) form the Calpain catalytic domain. Active-site residues include Cys93, His249, and Asn273. EF-hand domains follow at residues 537-572 (FSLD…LIHC) and 635-668 (IRLE…VMYS).

The protein belongs to the peptidase C2 family.

In terms of biological role, probable non-lysosomal thiol-protease. The sequence is that of Calpain-13 (Capn13) from Rattus norvegicus (Rat).